The following is a 39-amino-acid chain: Photosystem II reaction center protein J (39 aa).

A helical transmembrane segment spans residues 7–27 (IPLWLVATVAGMGVITLLGIF).

It belongs to the PsbJ family. As to quaternary structure, PSII is composed of 1 copy each of membrane proteins PsbA, PsbB, PsbC, PsbD, PsbE, PsbF, PsbH, PsbI, PsbJ, PsbK, PsbL, PsbM, PsbT, PsbX, PsbY, PsbZ, Psb30/Ycf12, peripheral proteins PsbO, CyanoQ (PsbQ), PsbU, PsbV and a large number of cofactors. It forms dimeric complexes.

It localises to the cellular thylakoid membrane. One of the components of the core complex of photosystem II (PSII). PSII is a light-driven water:plastoquinone oxidoreductase that uses light energy to abstract electrons from H(2)O, generating O(2) and a proton gradient subsequently used for ATP formation. It consists of a core antenna complex that captures photons, and an electron transfer chain that converts photonic excitation into a charge separation. This is Photosystem II reaction center protein J from Cyanothece sp. (strain PCC 7425 / ATCC 29141).